We begin with the raw amino-acid sequence, 124 residues long: MPTINQLTRIGRKAVFSRTKSPALQACPQKRGVCTRVMTVTPKKPNSALRKVARVRLSSGVEVTAYIPGIGHNLQEHSIVLIRGGRVKDLPGVRYHIIRGAKDTLGVVDRKRGRSKYGAKRPRA.

At Asp89 the chain carries 3-methylthioaspartic acid.

Belongs to the universal ribosomal protein uS12 family. As to quaternary structure, part of the 30S ribosomal subunit. Contacts proteins S8 and S17. May interact with IF1 in the 30S initiation complex.

With S4 and S5 plays an important role in translational accuracy. Functionally, interacts with and stabilizes bases of the 16S rRNA that are involved in tRNA selection in the A site and with the mRNA backbone. Located at the interface of the 30S and 50S subunits, it traverses the body of the 30S subunit contacting proteins on the other side and probably holding the rRNA structure together. The combined cluster of proteins S8, S12 and S17 appears to hold together the shoulder and platform of the 30S subunit. This chain is Small ribosomal subunit protein uS12, found in Treponema pallidum subsp. pallidum (strain SS14).